The sequence spans 472 residues: Siroheme synthase 1 (472 aa).

The interval 1–203 (MDYLPLFADL…GQLAQAEEEL (203 aa)) is precorrin-2 dehydrogenase /sirohydrochlorin ferrochelatase. NAD(+)-binding positions include 22–23 (EV) and 43–44 (QT). S128 is subject to Phosphoserine. The segment at 215–472 (GEVALVGAGP…AISPSVVNLA (258 aa)) is uroporphyrinogen-III C-methyltransferase. P224 is a binding site for S-adenosyl-L-methionine. D247 (proton acceptor) is an active-site residue. Residue K269 is the Proton donor of the active site. Residues 300 to 302 (GGD), I305, 330 to 331 (TA), M382, and G411 each bind S-adenosyl-L-methionine.

This sequence in the N-terminal section; belongs to the precorrin-2 dehydrogenase / sirohydrochlorin ferrochelatase family. In the C-terminal section; belongs to the precorrin methyltransferase family.

The catalysed reaction is uroporphyrinogen III + 2 S-adenosyl-L-methionine = precorrin-2 + 2 S-adenosyl-L-homocysteine + H(+). The enzyme catalyses precorrin-2 + NAD(+) = sirohydrochlorin + NADH + 2 H(+). It catalyses the reaction siroheme + 2 H(+) = sirohydrochlorin + Fe(2+). The protein operates within cofactor biosynthesis; adenosylcobalamin biosynthesis; precorrin-2 from uroporphyrinogen III: step 1/1. It participates in cofactor biosynthesis; adenosylcobalamin biosynthesis; sirohydrochlorin from precorrin-2: step 1/1. It functions in the pathway porphyrin-containing compound metabolism; siroheme biosynthesis; precorrin-2 from uroporphyrinogen III: step 1/1. Its pathway is porphyrin-containing compound metabolism; siroheme biosynthesis; siroheme from sirohydrochlorin: step 1/1. The protein operates within porphyrin-containing compound metabolism; siroheme biosynthesis; sirohydrochlorin from precorrin-2: step 1/1. Functionally, multifunctional enzyme that catalyzes the SAM-dependent methylations of uroporphyrinogen III at position C-2 and C-7 to form precorrin-2 via precorrin-1. Then it catalyzes the NAD-dependent ring dehydrogenation of precorrin-2 to yield sirohydrochlorin. Finally, it catalyzes the ferrochelation of sirohydrochlorin to yield siroheme. This is Siroheme synthase 1 from Yersinia enterocolitica serotype O:8 / biotype 1B (strain NCTC 13174 / 8081).